The following is a 375-amino-acid chain: Tryptophan dimethylallyltransferase (375 aa).

L-tryptophan is bound by residues 83–84 (IL) and Glu-92. The substrate site is built by Arg-103, Lys-189, and Tyr-191. L-tryptophan-binding residues include Tyr-193 and Arg-246. The substrate site is built by Arg-259, Lys-261, Tyr-263, Gln-345, and Tyr-347.

This sequence belongs to the tryptophan dimethylallyltransferase family. As to quaternary structure, homodimer.

The catalysed reaction is L-tryptophan + dimethylallyl diphosphate = 4-(3-methylbut-2-enyl)-L-tryptophan + diphosphate. It functions in the pathway alkaloid biosynthesis; ergot alkaloid biosynthesis. Tryptophan dimethylallyltransferase; part of the gene cluster that mediates the biosynthesis of fungal ergot alkaloid. DmaW catalyzes the first step of ergot alkaloid biosynthesis by condensing dimethylallyl diphosphate (DMAP) and tryptophan to form 4-dimethylallyl-L-tryptophan. The second step is catalyzed by the methyltransferase easF that methylates 4-dimethylallyl-L-tryptophan in the presence of S-adenosyl-L-methionine, resulting in the formation of 4-dimethylallyl-L-abrine. The catalase easC and the FAD-dependent oxidoreductase easE then transform 4-dimethylallyl-L-abrine to chanoclavine-I which is further oxidized by easD in the presence of NAD(+), resulting in the formation of chanoclavine-I aldehyde. Chanoclavine-I aldehyde is the precursor of ergoamides and ergopeptines in Clavicipitaceae, and clavine-type alcaloids such as fumiclavine in Trichocomaceae. However, the metabolites downstream of chanoclavine-I aldehyde in Arthrodermataceae have not been identified yet. This Trichophyton verrucosum (strain HKI 0517) protein is Tryptophan dimethylallyltransferase.